The sequence spans 263 residues: Acyl-[acyl-carrier-protein]--UDP-N-acetylglucosamine O-acyltransferase (263 aa).

Belongs to the transferase hexapeptide repeat family. LpxA subfamily. As to quaternary structure, homotrimer.

It is found in the cytoplasm. It catalyses the reaction a (3R)-hydroxyacyl-[ACP] + UDP-N-acetyl-alpha-D-glucosamine = a UDP-3-O-[(3R)-3-hydroxyacyl]-N-acetyl-alpha-D-glucosamine + holo-[ACP]. The protein operates within glycolipid biosynthesis; lipid IV(A) biosynthesis; lipid IV(A) from (3R)-3-hydroxytetradecanoyl-[acyl-carrier-protein] and UDP-N-acetyl-alpha-D-glucosamine: step 1/6. Functionally, involved in the biosynthesis of lipid A, a phosphorylated glycolipid that anchors the lipopolysaccharide to the outer membrane of the cell. The protein is Acyl-[acyl-carrier-protein]--UDP-N-acetylglucosamine O-acyltransferase of Aeromonas salmonicida (strain A449).